Here is a 185-residue protein sequence, read N- to C-terminus: UPF0301 protein HCH_00550 (185 aa).

The protein belongs to the UPF0301 (AlgH) family.

The polypeptide is UPF0301 protein HCH_00550 (Hahella chejuensis (strain KCTC 2396)).